An 831-amino-acid polypeptide reads, in one-letter code: Periplasmic nitrate reductase (831 aa).

Residues 1-38 (MSMARRDFIKQTAAAAAATVAGVPLTGYTQNIVTESEA) constitute a signal peptide (tat-type signal). The 4Fe-4S Mo/W bis-MGD-type domain maps to 41-97 (LKWSKAPCRFCGTGCGVNVAVKDNQVVATHGDFNAEVNKGLNCVKGYFLSKIMYGSD). [4Fe-4S] cluster-binding residues include cysteine 48, cysteine 51, cysteine 55, and cysteine 83. Mo-bis(molybdopterin guanine dinucleotide) contacts are provided by residues lysine 85, glutamine 152, asparagine 177, cysteine 181, 214–221 (WGSNMAEM), 245–249 (STFEH), 264–266 (QSD), methionine 375, glutamine 379, asparagine 485, 511–512 (SD), lysine 534, aspartate 561, and 721–730 (TGRVLEHWHS). Tryptophan 797 lines the substrate pocket. The Mo-bis(molybdopterin guanine dinucleotide) site is built by asparagine 805 and lysine 822.

The protein belongs to the prokaryotic molybdopterin-containing oxidoreductase family. NasA/NapA/NarB subfamily. As to quaternary structure, component of the periplasmic nitrate reductase NapAB complex composed of NapA and NapB. Requires [4Fe-4S] cluster as cofactor. It depends on Mo-bis(molybdopterin guanine dinucleotide) as a cofactor. Post-translationally, predicted to be exported by the Tat system. The position of the signal peptide cleavage has not been experimentally proven.

The protein localises to the periplasm. The catalysed reaction is 2 Fe(II)-[cytochrome] + nitrate + 2 H(+) = 2 Fe(III)-[cytochrome] + nitrite + H2O. Functionally, catalytic subunit of the periplasmic nitrate reductase complex NapAB. Receives electrons from NapB and catalyzes the reduction of nitrate to nitrite. The chain is Periplasmic nitrate reductase from Bordetella parapertussis (strain 12822 / ATCC BAA-587 / NCTC 13253).